The sequence spans 161 residues: Endoribonuclease YbeY (161 aa).

His-120, His-124, and Asp-130 together coordinate Zn(2+).

It belongs to the endoribonuclease YbeY family. Zn(2+) serves as cofactor.

It localises to the cytoplasm. Single strand-specific metallo-endoribonuclease involved in late-stage 70S ribosome quality control and in maturation of the 3' terminus of the 16S rRNA. This Chlamydia trachomatis serovar L2 (strain ATCC VR-902B / DSM 19102 / 434/Bu) protein is Endoribonuclease YbeY.